Here is a 586-residue protein sequence, read N- to C-terminus: Acyl-coenzyme A synthetase ACSM3, mitochondrial (586 aa).

Residues 1-27 constitute a mitochondrion transit peptide; the sequence is MLACVTMKMLRHAKCFQRLAIFGSVRA. Residues Lys-73 and Lys-106 each carry the N6-succinyllysine modification. The residue at position 157 (Lys-157) is an N6-acetyllysine. Residues 235–243, 374–379, Asp-461, Arg-476, and Lys-572 contribute to the ATP site; these read TSGTSGYPK and EGYGQT.

This sequence belongs to the ATP-dependent AMP-binding enzyme family. The cofactor is Mg(2+). Mn(2+) serves as cofactor.

The protein localises to the mitochondrion. It localises to the mitochondrion matrix. The enzyme catalyses a medium-chain fatty acid + ATP + CoA = a medium-chain fatty acyl-CoA + AMP + diphosphate. It catalyses the reaction propanoate + ATP + CoA = propanoyl-CoA + AMP + diphosphate. It carries out the reaction butanoate + ATP + CoA = butanoyl-CoA + AMP + diphosphate. The catalysed reaction is 2-methylpropanoate + ATP + CoA = 2-methylpropanoyl-CoA + AMP + diphosphate. The enzyme catalyses 2-methylbutanoate + ATP + CoA = 2-methylbutanoyl-CoA + AMP + diphosphate. It catalyses the reaction octanoate + ATP + CoA = octanoyl-CoA + AMP + diphosphate. Catalyzes the activation of fatty acids by CoA to produce an acyl-CoA, the first step in fatty acid metabolism. Capable of activating medium-chain fatty acids with a preference for isobutyrate among fatty acids with 2-6 carbon atoms. In Pongo abelii (Sumatran orangutan), this protein is Acyl-coenzyme A synthetase ACSM3, mitochondrial (ACSM3).